A 355-amino-acid polypeptide reads, in one-letter code: Protein-glutamate methylesterase/protein-glutamine glutaminase (355 aa).

The Response regulatory domain occupies 3 to 121 (NVLVVEDSPV…HPDHEATARK (119 aa)). 4-aspartylphosphate is present on D54. The CheB-type methylesterase domain maps to 154-348 (PLLNRVAPAR…AALTNLVAER (195 aa)). Active-site residues include S170, H197, and D290.

It belongs to the CheB family. Post-translationally, phosphorylated by CheA. Phosphorylation of the N-terminal regulatory domain activates the methylesterase activity.

It is found in the cytoplasm. It catalyses the reaction [protein]-L-glutamate 5-O-methyl ester + H2O = L-glutamyl-[protein] + methanol + H(+). The catalysed reaction is L-glutaminyl-[protein] + H2O = L-glutamyl-[protein] + NH4(+). Its function is as follows. Involved in chemotaxis. Part of a chemotaxis signal transduction system that modulates chemotaxis in response to various stimuli. Catalyzes the demethylation of specific methylglutamate residues introduced into the chemoreceptors (methyl-accepting chemotaxis proteins or MCP) by CheR. Also mediates the irreversible deamidation of specific glutamine residues to glutamic acid. This is Protein-glutamate methylesterase/protein-glutamine glutaminase from Nitrosospira multiformis (strain ATCC 25196 / NCIMB 11849 / C 71).